The primary structure comprises 1064 residues: Serine/threonine protein kinase KIN1 (1064 aa).

A disordered region spans residues 1–113; sequence MDDYHVNTAF…SSQGMPKQFH (113 aa). Positions 8–36 are enriched in polar residues; that stretch reads TAFSMGRGNQQDDGNSESNSMHTQPSTMA. Basic and acidic residues predominate over residues 74–91; the sequence is AEQKERQVELEGKSRENA. Positions 93–108 are enriched in polar residues; the sequence is KPNTTSQSRVSSSQGM. A Protein kinase domain is found at 120–398; it reads WEFVETVGAG…LKQVVEHHWM (279 aa). ATP-binding positions include 126–134 and K149; that span reads VGAGSMGKV. Catalysis depends on D269, which acts as the Proton acceptor. At S534 the chain carries Phosphoserine. The disordered stretch occupies residues 549-621; that stretch reads SEPEATLATK…SPTPQGNDYQ (73 aa). Over residues 557–571 the composition is skewed to polar residues; the sequence is TKDTSVPFTPKNSDG. S593 carries the phosphoserine modification. A compositionally biased stretch (basic and acidic residues) spans 598 to 608; sequence KSSDNQRREME. Position 646 is a phosphoserine (S646). 5 disordered regions span residues 652-672, 694-714, 762-797, 823-843, and 958-1016; these read TIEQ…QKTH, MNEP…FPAL, EGSD…HARR, LESS…QTND, and HESI…GMTT. The segment covering 654 to 670 has biased composition (polar residues); it reads EQTSVNSNNSINKPVQK. S764 bears the Phosphoserine mark. The span at 779-794 shows a compositional bias: basic residues; that stretch reads KGRKLHPSARAKSVGH. Polar residues-rich tracts occupy residues 832-843, 963-989, and 998-1016; these read DSLGNVTSQTND, RQGS…SITE, and GTSL…GMTT. S986 is modified (phosphoserine). One can recognise a KA1 domain in the interval 1015–1064; that stretch reads TTTEKEPIKFEIHIVKVRIVGLAGVHFKKISGNTWLYKELASSILKELKL.

This sequence belongs to the protein kinase superfamily. CAMK Ser/Thr protein kinase family. NIM1 subfamily. As to quaternary structure, interacts with SEC9 and SRO7. In terms of processing, autophosphorylated.

It is found in the cytoplasm. It localises to the cell membrane. It catalyses the reaction L-seryl-[protein] + ATP = O-phospho-L-seryl-[protein] + ADP + H(+). It carries out the reaction L-threonyl-[protein] + ATP = O-phospho-L-threonyl-[protein] + ADP + H(+). Functionally, serine/threonine protein kinase involved in the regulation of exocytosis. Induces phosphorylation of SEC9 and its release from the plasma membrane to the cytosol. This is Serine/threonine protein kinase KIN1 (KIN1) from Saccharomyces cerevisiae (strain ATCC 204508 / S288c) (Baker's yeast).